Reading from the N-terminus, the 505-residue chain is DNA primase DnaG (505 aa).

The Toprim domain occupies 167-241 (DAVIVVEGRA…DVDYVAFAPP (75 aa)). 3 residues coordinate Mg(2+): glutamate 173, aspartate 215, and aspartate 217. Positions 268–410 (DEPNLREAAT…PLDNEPRSIE (143 aa)) are disordered. The segment covering 318-327 (AGVVAGGARS) has biased composition (low complexity). Composition is skewed to acidic residues over residues 349–376 (GEVD…DAEF) and 384–402 (PNLD…DAPL).

This sequence belongs to the archaeal DnaG primase family. Forms a ternary complex with MCM helicase and DNA. The cofactor is Mg(2+).

It carries out the reaction ssDNA + n NTP = ssDNA/pppN(pN)n-1 hybrid + (n-1) diphosphate.. Functionally, RNA polymerase that catalyzes the synthesis of short RNA molecules used as primers for DNA polymerase during DNA replication. The protein is DNA primase DnaG of Halorubrum lacusprofundi (strain ATCC 49239 / DSM 5036 / JCM 8891 / ACAM 34).